The following is a 133-amino-acid chain: Fatty acid-binding protein, heart (133 aa).

Val-2 carries the post-translational modification N-acetylvaline. Residue Thr-8 is modified to Phosphothreonine. Residue Tyr-20 is modified to Phosphotyrosine; by Tyr-kinases. Ser-23 carries the post-translational modification Phosphoserine. Phosphothreonine is present on Thr-30. A Phosphoserine modification is found at Ser-83. 127 to 129 (RTY) lines the (9Z)-octadecenoate pocket. 127–129 (RTY) is a hexadecanoate binding site. 127-129 (RTY) provides a ligand contact to octadecanoate.

This sequence belongs to the calycin superfamily. Fatty-acid binding protein (FABP) family.

Its subcellular location is the cytoplasm. FABPs are thought to play a role in the intracellular transport of long-chain fatty acids and their acyl-CoA esters. This is Fatty acid-binding protein, heart (FABP3) from Homo sapiens (Human).